We begin with the raw amino-acid sequence, 354 residues long: Neuronal growth regulator 1 (354 aa).

An N-terminal signal peptide occupies residues 1 to 37; that stretch reads MDMMLLVQGACCSNQWLAAVLLSLCCLLPSCLPAGQS. Ig-like C2-type domains are found at residues 38 to 134, 139 to 221, and 225 to 313; these read VDFP…VHLT, PKIY…KVVV, and PTIQ…LPLN. A disulfide bridge connects residues C60 and C118. N73 and N155 each carry an N-linked (GlcNAc...) asparagine glycan. 2 disulfides stabilise this stretch: C160-C203 and C245-C297. At Y187 the chain carries Phosphotyrosine. N275, N286, N294, and N307 each carry an N-linked (GlcNAc...) asparagine glycan. G324 carries GPI-anchor amidated glycine lipidation. The propeptide at 325–354 is removed in mature form; it reads SADVLFSCWYLVLTLSSFTSIFYLKNAILQ.

Belongs to the immunoglobulin superfamily. IgLON family.

It is found in the cell membrane. Functionally, may be involved in cell-adhesion. May function as a trans-neural growth-promoting factor in regenerative axon sprouting in the mammalian brain. This Pongo abelii (Sumatran orangutan) protein is Neuronal growth regulator 1 (NEGR1).